A 234-amino-acid polypeptide reads, in one-letter code: 3-deoxy-manno-octulosonate cytidylyltransferase (234 aa).

This sequence belongs to the KdsB family.

It is found in the cytoplasm. It catalyses the reaction 3-deoxy-alpha-D-manno-oct-2-ulosonate + CTP = CMP-3-deoxy-beta-D-manno-octulosonate + diphosphate. The protein operates within nucleotide-sugar biosynthesis; CMP-3-deoxy-D-manno-octulosonate biosynthesis; CMP-3-deoxy-D-manno-octulosonate from 3-deoxy-D-manno-octulosonate and CTP: step 1/1. Its pathway is bacterial outer membrane biogenesis; lipopolysaccharide biosynthesis. In terms of biological role, activates KDO (a required 8-carbon sugar) for incorporation into bacterial lipopolysaccharide in Gram-negative bacteria. This chain is 3-deoxy-manno-octulosonate cytidylyltransferase, found in Aquifex aeolicus (strain VF5).